A 196-amino-acid chain; its full sequence is tRNA (pseudouridine(54)-N(1))-methyltransferase (196 aa).

Leucine 126 is a binding site for S-adenosyl-L-methionine.

The protein belongs to the methyltransferase superfamily. TrmY family. As to quaternary structure, homodimer.

It is found in the cytoplasm. The enzyme catalyses pseudouridine(54) in tRNA + S-adenosyl-L-methionine = N(1)-methylpseudouridine(54) in tRNA + S-adenosyl-L-homocysteine + H(+). In terms of biological role, specifically catalyzes the N1-methylation of pseudouridine at position 54 (Psi54) in tRNAs. In Halobacterium salinarum (strain ATCC 700922 / JCM 11081 / NRC-1) (Halobacterium halobium), this protein is tRNA (pseudouridine(54)-N(1))-methyltransferase.